The sequence spans 743 residues: Elongation factor 2 (743 aa).

Residues 19–265 form the tr-type G domain; the sequence is NNIRNIGIIA…MVVRHLPSPK (247 aa). GTP contacts are provided by residues 28-35, 94-98, and 148-151; these read AHIHHGKT, DTPGH, and NKVD. His615 bears the Diphthamide mark.

The protein belongs to the TRAFAC class translation factor GTPase superfamily. Classic translation factor GTPase family. EF-G/EF-2 subfamily.

Its subcellular location is the cytoplasm. In terms of biological role, catalyzes the GTP-dependent ribosomal translocation step during translation elongation. During this step, the ribosome changes from the pre-translocational (PRE) to the post-translocational (POST) state as the newly formed A-site-bound peptidyl-tRNA and P-site-bound deacylated tRNA move to the P and E sites, respectively. Catalyzes the coordinated movement of the two tRNA molecules, the mRNA and conformational changes in the ribosome. The protein is Elongation factor 2 of Nanoarchaeum equitans (strain Kin4-M).